Here is a 257-residue protein sequence, read N- to C-terminus: Hydroxyacylglutathione hydrolase (257 aa).

The Zn(2+) site is built by histidine 54, histidine 56, aspartate 58, histidine 59, histidine 113, aspartate 137, and histidine 175.

This sequence belongs to the metallo-beta-lactamase superfamily. Glyoxalase II family. Monomer. Zn(2+) is required as a cofactor.

It catalyses the reaction an S-(2-hydroxyacyl)glutathione + H2O = a 2-hydroxy carboxylate + glutathione + H(+). It participates in secondary metabolite metabolism; methylglyoxal degradation; (R)-lactate from methylglyoxal: step 2/2. In terms of biological role, thiolesterase that catalyzes the hydrolysis of S-D-lactoyl-glutathione to form glutathione and D-lactic acid. The polypeptide is Hydroxyacylglutathione hydrolase (Nostoc punctiforme (strain ATCC 29133 / PCC 73102)).